Here is a 76-residue protein sequence, read N- to C-terminus: Small proline-rich protein 2I (76 aa).

Tandem repeats lie at residues 21-29 (KKCPEPCPP), 30-38 (PQCPEPCPP), and 39-47 (PKCPEPCPE). Residues 21–47 (KKCPEPCPPPQCPEPCPPPKCPEPCPE) form a 3 X 9 AA approximate tandem repeats region. Residues 40 to 53 (KCPEPCPESCPPPS) show a composition bias toward pro residues. Positions 40 to 76 (KCPEPCPESCPPPSYQQKCPPVQPPPPCQQKCPPKSK) are disordered.

This sequence belongs to the cornifin (SPRR) family. In terms of tissue distribution, not expressed in uterus.

The protein resides in the cytoplasm. Cross-linked envelope protein of keratinocytes. It is a keratinocyte protein that first appears in the cell cytosol, but ultimately becomes cross-linked to membrane proteins by transglutaminase. All that results in the formation of an insoluble envelope beneath the plasma membrane. This chain is Small proline-rich protein 2I (Sprr2i), found in Mus musculus (Mouse).